The chain runs to 135 residues: Probable transporter XF_0766 (135 aa).

A run of 4 helical transmembrane segments spans residues 4 to 24, 45 to 65, 71 to 91, and 114 to 134; these read YWYP…LLLL, AQDI…SVIF, VTVA…GLGT, and IVAT…MGVY.

The protein belongs to the TsuA/YedE (TC 9.B.102) family.

It localises to the cell inner membrane. This Xylella fastidiosa (strain 9a5c) protein is Probable transporter XF_0766.